The chain runs to 243 residues: DNA repair protein RecO (243 aa).

Belongs to the RecO family.

Involved in DNA repair and RecF pathway recombination. In Xylella fastidiosa (strain M12), this protein is DNA repair protein RecO.